A 314-amino-acid chain; its full sequence is Beta-lactamase 2 (314 aa).

Positions 1–26 (MLHTRIRRATLGAVAALSLVPVMACG) are cleaved as a signal peptide. A compositionally biased stretch (low complexity) spans 32–47 (DAAEPAGSAPSSSAAA). The tract at residues 32 to 51 (DAAEPAGSAPSSSAAAHKPG) is disordered. Catalysis depends on serine 96, which acts as the Acyl-ester intermediate. Residue 258–260 (KTG) coordinates substrate.

Belongs to the class-A beta-lactamase family.

It carries out the reaction a beta-lactam + H2O = a substituted beta-amino acid. The protein is Beta-lactamase 2 (blaU) of Streptomyces cacaoi.